The primary structure comprises 165 residues: Sorting nexin-12 (165 aa).

The tract at residues 1–20 (MSDTAVADTRRLNSKPQDLT) is disordered. Ser-2 bears the N-acetylserine mark. Tyr-23 is subject to Phosphotyrosine. The PX domain occupies 28–151 (NFLEIDIFNP…HMFLQEEAID (124 aa)). Arg-71, Ser-73, Lys-96, and Arg-118 together coordinate a 1,2-diacyl-sn-glycero-3-phospho-(1D-myo-inositol-3-phosphate). A Phosphoserine modification is found at Ser-73.

It belongs to the sorting nexin family.

Its subcellular location is the membrane. May be involved in several stages of intracellular trafficking. The chain is Sorting nexin-12 (Snx12) from Mus musculus (Mouse).